Reading from the N-terminus, the 197-residue chain is Large ribosomal subunit protein bL17 (197 aa).

Positions 136–197 (RAAKKADAPQ…DAEKSSDTEK (62 aa)) are disordered. Residues 148-187 (VADEATDADESVEDEAPAQDDSADEVEAAADETPADDAEA) show a composition bias toward acidic residues. The segment covering 188 to 197 (DAEKSSDTEK) has biased composition (basic and acidic residues).

It belongs to the bacterial ribosomal protein bL17 family. Part of the 50S ribosomal subunit. Contacts protein L32.

This Beutenbergia cavernae (strain ATCC BAA-8 / DSM 12333 / CCUG 43141 / JCM 11478 / NBRC 16432 / NCIMB 13614 / HKI 0122) protein is Large ribosomal subunit protein bL17.